The sequence spans 350 residues: MQVSDFHFDLPDELIARYPQSERTASRLLQLNGNTGAVKDGSFKDVLELVQAGDLLVFNNTRVIPARMFGRKESGGKLEVLVERMLDEKRFLAHVRSSKSPKPGTLVFLGEEDQYSAEMVARQDALFELHLKADKTILEVLEEIGHMPLPPYIDRPDEDADKERYQTVYNQKPGAVAAPTAGLHFDNQLLEQIKAKGAEFAYVTLHVGAGTFQPVKVDNILEHHMHSEYAEVPQEVVDAINATKARGGRVIAVGTTSVRSLESAAQESLKNGTELMPFFGDTEIFIFPGYQYQLVDCLITNFHLPESTLIMLVSAFAGYDHTMNAYQHAVSNQYRFFSYGDAMFIEKKTQ.

It belongs to the QueA family. In terms of assembly, monomer.

It localises to the cytoplasm. The catalysed reaction is 7-aminomethyl-7-carbaguanosine(34) in tRNA + S-adenosyl-L-methionine = epoxyqueuosine(34) in tRNA + adenine + L-methionine + 2 H(+). The protein operates within tRNA modification; tRNA-queuosine biosynthesis. Functionally, transfers and isomerizes the ribose moiety from AdoMet to the 7-aminomethyl group of 7-deazaguanine (preQ1-tRNA) to give epoxyqueuosine (oQ-tRNA). The chain is S-adenosylmethionine:tRNA ribosyltransferase-isomerase from Vibrio vulnificus (strain CMCP6).